Reading from the N-terminus, the 122-residue chain is Iron-sulfur cluster insertion protein ErpA (122 aa).

Iron-sulfur cluster is bound by residues Cys50, Cys114, and Cys116.

It belongs to the HesB/IscA family. Homodimer. It depends on iron-sulfur cluster as a cofactor.

Its function is as follows. Required for insertion of 4Fe-4S clusters for at least IspG. The chain is Iron-sulfur cluster insertion protein ErpA from Alkalilimnicola ehrlichii (strain ATCC BAA-1101 / DSM 17681 / MLHE-1).